The sequence spans 314 residues: Homoserine kinase (314 aa).

Residue 97–107 coordinates ATP; the sequence is PPARGMGSSAT.

Belongs to the GHMP kinase family. Homoserine kinase subfamily.

The protein resides in the cytoplasm. It catalyses the reaction L-homoserine + ATP = O-phospho-L-homoserine + ADP + H(+). The protein operates within amino-acid biosynthesis; L-threonine biosynthesis; L-threonine from L-aspartate: step 4/5. Functionally, catalyzes the ATP-dependent phosphorylation of L-homoserine to L-homoserine phosphate. This Synechococcus sp. (strain RCC307) protein is Homoserine kinase.